We begin with the raw amino-acid sequence, 181 residues long: GTP cyclohydrolase 1 2 (181 aa).

Belongs to the GTP cyclohydrolase I family. In terms of assembly, homomer.

The enzyme catalyses GTP + H2O = 7,8-dihydroneopterin 3'-triphosphate + formate + H(+). It functions in the pathway cofactor biosynthesis; 7,8-dihydroneopterin triphosphate biosynthesis; 7,8-dihydroneopterin triphosphate from GTP: step 1/1. The sequence is that of GTP cyclohydrolase 1 2 (folE2) from Pseudomonas aeruginosa (strain ATCC 15692 / DSM 22644 / CIP 104116 / JCM 14847 / LMG 12228 / 1C / PRS 101 / PAO1).